We begin with the raw amino-acid sequence, 875 residues long: Probable inorganic carbon transporter subunit DabA (875 aa).

Residues Cys-380, Asp-382, His-563, and Cys-578 each contribute to the Zn(2+) site.

This sequence belongs to the inorganic carbon transporter (TC 9.A.2) DabA family. Forms a complex with DabB. It depends on Zn(2+) as a cofactor.

It is found in the cell membrane. In terms of biological role, part of an energy-coupled inorganic carbon pump. This Geobacillus thermodenitrificans (strain NG80-2) protein is Probable inorganic carbon transporter subunit DabA.